Consider the following 187-residue polypeptide: Prepilin peptidase-dependent protein B (187 aa).

Positions 1–7 (MPVKEQG) are cleaved as a propeptide — leader sequence. At phenylalanine 8 the chain carries N-methylphenylalanine. A helical transmembrane segment spans residues 8-28 (FSLLEVLIAMAISSVLLLGAA).

The protein localises to the membrane. Not yet known. This is Prepilin peptidase-dependent protein B (ppdB) from Escherichia coli (strain K12).